A 125-amino-acid polypeptide reads, in one-letter code: uncharacterized protein (125 aa).

Its subcellular location is the mitochondrion. This is an uncharacterized protein from Paramecium tetraurelia.